The following is a 584-amino-acid chain: MSALLSADDLNDFISPGVACIKPPASTNTNTNTTTTDSYNENGEVEIQIDSQGNPLEISKIDGKQIQTNQLTPAQISLADCLACSGCITSAEEVLVAQHSHQELIKALQSPTKNKVFVVSISHQSRASLAMAYNVTIEIMDKLLINLFIKQMGFTYIIGTSLGRKLSLINEAKEVINRKTEEGPILSSICPGWVLYAEKTHPYIIPKLSTIKSPQQITGCLLKNLTCEALQIDKSEIYHLSIMPCFDKKLESARPEIYDNENEEDKSISISVPDVDCVITAKELITLLEECPQYQLIPPQPTQPTLGGDLDLSVTEIYKQYAPPNWPFIEYSWSNDSGSSSGGYAYNYLNIYRNDLVLRKGYDPNKFTINLINGRNSDIYEMRLIYDSKETLASAAVVNGFRNIQNLVRKLKPNTNKSMNNKINPLVARRRARMINRGKSESISQEIEIEIADASKVDYVEIMACPNGCINGGGQINPPTTTTISNTTGLPQKEIEKQWINKVLDKYNTIPILFDLSLPSTSSSLEIMKYIEWSENFEKHFNISNDRLFKISFNPRENKSTGTATTTDDNNDPAATALLVGSKW.

[4Fe-4S] cluster contacts are provided by Cys20, Cys81, Cys84, Cys87, Cys190, Cys245, Cys465, and Cys469.

Belongs to the NARF family.

Functionally, component of the cytosolic Fe/S protein assembly machinery. Required for maturation of extramitochondrial Fe/S proteins. May play a role in the transfer of pre-assembled Fe/S clusters to target apoproteins. This Candida dubliniensis (strain CD36 / ATCC MYA-646 / CBS 7987 / NCPF 3949 / NRRL Y-17841) (Yeast) protein is Cytosolic Fe-S cluster assembly factor NAR1 (NAR1).